The chain runs to 501 residues: Pentatricopeptide repeat-containing protein At2g36730 (501 aa).

9 PPR repeats span residues 77 to 111 (TPST…GIKP), 112 to 146 (NKLT…GFDF), 147 to 177 (DVYV…MTER), 178 to 212 (NVVS…RFCP), 213 to 243 (DETT…VREL), 246 to 276 (NCRL…MVDK), 277 to 312 (NVWT…SVRP), 313 to 343 (NYVT…MEKI), and 349 to 379 (MMIH…MPFE). Positions 384-462 (VWRTLLSACS…IAGESCLELG (79 aa)) are type E motif. The type E(+) motif stretch occupies residues 463–493 (GSFHRFFSGYDPRSEYVSIYELLDLFKFQLT).

It belongs to the PPR family. PCMP-E subfamily.

The sequence is that of Pentatricopeptide repeat-containing protein At2g36730 (PCMP-E44) from Arabidopsis thaliana (Mouse-ear cress).